The following is a 174-amino-acid chain: Calcineurin subunit B (174 aa).

EF-hand domains lie at 21–56 (EEIERLRKRFMKLDKDGSGTIDKNEFLTIPGISSNP), 60–88 (RLMDVFDEDGNGTIDFQEFIMGLSAFSGK), 90–125 (SKLDKLKFAFKIYDIDRDGYIGNGELFIVMKMMVGK), and 131–166 (ELQQIVDKTMMEADEDGDGRLNFHEFKNAVDSKSVA). Positions 34, 36, 38, 40, 45, 66, 68, 70, 72, 77, 103, 105, 107, 109, 114, 144, 146, 148, 150, and 155 each coordinate Ca(2+).

Belongs to the calcineurin regulatory subunit family. As to quaternary structure, composed of a catalytic subunit (A) and a regulatory subunit (B).

Regulatory subunit of calcineurin, a calcium-dependent, calmodulin stimulated protein phosphatase. Confers calcium sensitivity. In Debaryomyces hansenii (strain ATCC 36239 / CBS 767 / BCRC 21394 / JCM 1990 / NBRC 0083 / IGC 2968) (Yeast), this protein is Calcineurin subunit B (CNB1).